Reading from the N-terminus, the 1293-residue chain is MAQQIVQSLQDEGTQSLKLDFSMKYVLGYRSDFKNNIFQYTMNDQNRIIYPAGNTIVISNNENKQQFINCIPGTKGITCMTLSPSKRLLAWSEDCDSGIIVVFDLIKLDKLEKAKNQNYQEPSDKDKLDKQAEKDRRDRFEKEKREKIDKLQKEVKRIITTLDCKSRHYVALDFNKINEKRIVALSCAPDWQLIYFQLDKQKTVIINQVPLKVGDNMRYTHCFFHPKEEDFIVAIGTGAIKPYKLGADGQFKQKDPPFVKKESKDQAHSPNYLSYCILQDGYMVIGTDMGEILLFQPSCEFKTILASSPKNEQFAIQCIQPYSKGFLVGGKECTILFYEKDVDLKNPYKLCSKKIQFRDMKAMITSLLLTPNEEKLIVGVDSGQLLQVPFTSDSMQLNEENSKCEPLFMPFHSDKITGLDVCIRKSLVATCSVDKTVRIWNYSDNQLENSKEFEEEAYAVAFHPSGFHIIVAFTEKIRLMNIFENDLISFKELSVKNCREIQFSNGGHFFAITNVSMVQVFQFYTGENPSNLVFRGSGKVRTIFWEEDDQGFYTGSTDGLVIYWRVDDNGPQKTQIAQFNNLIITSITGLYNPDTTTQGLERILFVSGVSSSQENEGEKCVYKLVISCRQDKEGREITDNTLKKIYYVSQPEQKIFTGTNVSQIAISHSKKLFFFATEDRPGAIRITKYPFTNEIMEIQSHFGPITRMRISFKDNYIFTAGEDGALIIYENKEKEYQVKIENESVEAAAEEFLIPRDQYNDQKREIEKLKRQLNEERMKQEQQIKEKMKDRDDKINQLENQQKDSDNRDLNKYQLLEREKNEMIESYEEKKRMMKLQHENNKRTIENEYKKKIALEMSRNEELAREKEKEEKRFQSEIQQYQEEHLRQMEEKRRHYEEQLAIEKQLYNDLHLKREELAYKFDQKRNKLEMEAEELIDQLKEENESKMQVLFKNLEKAEIKKMDRRNDYDTEAQKLEEQKSKLKGTMEDITSIQETNKMLQKEKESHAKEIDEREKTIRDKGRRIYELKKKTQELEKFKFVLDYKIKELKRDIGPKEEEIAKMKEQIANMNSEILHFKRTNANLKLIVTDLRLRQEGMKKEIEDQSKVIQQNNQYIKAFEQDMSDCHQHIADYKKLKQKVLNLYNQYVQGDDSKKKRLENNDQQKEIMKERAHLETSVNNLKIKHDKNQSVHKSDTTIIMKHNTFLIFEINHLKREKKKILEDKAKMLMQATQKKKQDGTSRVDIDSLEKEIQKNEDEKRKLKEDIEKLRQYNDQIKNQLRQQIQNQQDDDEDN.

The WD 1 repeat unit spans residues 72–113 (PGTKGITCMTLSPSKRLLAWSEDCDSGIIVVFDLIKLDKLEK). The tract at residues 117–143 (QNYQEPSDKDKLDKQAEKDRRDRFEKE) is disordered. The segment covering 122-143 (PSDKDKLDKQAEKDRRDRFEKE) has biased composition (basic and acidic residues). WD repeat units follow at residues 309–348 (PKNE…KNPY), 359–398 (DMKA…MQLN), 411–450 (FHSD…LENS), 535–574 (RGSG…PQKT), and 700–739 (SHFG…YQVK). 3 coiled-coil regions span residues 756–1016 (RDQY…REKT), 1045–1079 (IKEL…FKRT), and 1209–1285 (INHL…QIQN).

Belongs to the CFAP57 family. As to quaternary structure, forms a heterodimer with CFAP57C. Associates with components of the nexin-dynein regulatory complex (N-DRC) and the CFAP184:CFAP263 complex.

The protein localises to the cell projection. It is found in the cilium. Its function is as follows. Associates with components of the nexin-dynein regulatory complex (N-DRC), a key regulator of ciliary/flagellar motility, and might act as an inner dynein arm (IDA) hub or linkage. The polypeptide is Cilia- and flagella-associated protein 57 A (CFAP57A) (Tetrahymena thermophila (strain SB210)).